Consider the following 165-residue polypeptide: Bark lectin isoform 1 (165 aa).

N27 and N57 each carry an N-linked (GlcNAc...) asparagine glycan. Intrachain disulfides connect C33–C80 and C126–C133.

This sequence belongs to the protease inhibitor I3 (leguminous Kunitz-type inhibitor) family. As to quaternary structure, dimer.

Functionally, glucose and N-acetylglucosamine binding lectin. Has hemagglutinating activity against human and rabbit erythrocytes which does not require divalent cations. Inhibits factor Xa and, to a lesser extent, trypsin. Does not inhibit neutrophil elastase, human plasma kallikrein, papain, human plasmin, porcine pancreatic kallikrein and bovin chymotrypsin. Has insecticidal activity against the termite species N.corniger. Induces apoptosis in prostrate cancer cell lines DU145 and PC3. The sequence is that of Bark lectin isoform 1 from Crateva tapia (Garlic-pear tree).